A 174-amino-acid polypeptide reads, in one-letter code: Dual-action ribosomal maturation protein DarP (174 aa).

It belongs to the DarP family.

Its subcellular location is the cytoplasm. In terms of biological role, member of a network of 50S ribosomal subunit biogenesis factors which assembles along the 30S-50S interface, preventing incorrect 23S rRNA structures from forming. Promotes peptidyl transferase center (PTC) maturation. This Vibrio atlanticus (strain LGP32) (Vibrio splendidus (strain Mel32)) protein is Dual-action ribosomal maturation protein DarP.